Consider the following 257-residue polypeptide: Thiazole synthase (257 aa).

The active-site Schiff-base intermediate with DXP is the K98. Residues G159, 185 to 186 (AG), and 207 to 208 (NT) each bind 1-deoxy-D-xylulose 5-phosphate.

It belongs to the ThiG family. In terms of assembly, homotetramer. Forms heterodimers with either ThiH or ThiS.

The protein localises to the cytoplasm. The enzyme catalyses [ThiS sulfur-carrier protein]-C-terminal-Gly-aminoethanethioate + 2-iminoacetate + 1-deoxy-D-xylulose 5-phosphate = [ThiS sulfur-carrier protein]-C-terminal Gly-Gly + 2-[(2R,5Z)-2-carboxy-4-methylthiazol-5(2H)-ylidene]ethyl phosphate + 2 H2O + H(+). It functions in the pathway cofactor biosynthesis; thiamine diphosphate biosynthesis. Catalyzes the rearrangement of 1-deoxy-D-xylulose 5-phosphate (DXP) to produce the thiazole phosphate moiety of thiamine. Sulfur is provided by the thiocarboxylate moiety of the carrier protein ThiS. In vitro, sulfur can be provided by H(2)S. The polypeptide is Thiazole synthase (Anaeromyxobacter dehalogenans (strain 2CP-C)).